We begin with the raw amino-acid sequence, 226 residues long: Phosphoglycolate phosphatase (226 aa).

Asp8 functions as the Nucleophile in the catalytic mechanism. Positions 8 and 10 each coordinate Mg(2+). Lys152 is a substrate binding site. Mg(2+)-binding residues include Asp175 and Asp179.

The protein belongs to the archaeal SPP-like hydrolase family. Requires Mg(2+) as cofactor.

The catalysed reaction is 2-phosphoglycolate + H2O = glycolate + phosphate. Functionally, catalyzes the dephosphorylation of 2-phosphoglycolate. This is Phosphoglycolate phosphatase from Natronomonas pharaonis (strain ATCC 35678 / DSM 2160 / CIP 103997 / JCM 8858 / NBRC 14720 / NCIMB 2260 / Gabara) (Halobacterium pharaonis).